We begin with the raw amino-acid sequence, 1530 residues long: Multidrug resistance-associated protein 1 (1530 aa).

At 1–33 the chain is on the extracellular side; the sequence is MALRDFCSVDGSDLFWEWNVTWNTSNPDFTKCF. A glycan (N-linked (GlcNAc...) asparagine) is linked at Asn19. Residues 34–54 form a helical membrane-spanning segment; it reads QNTVLVWVPCSYLWVCFPFYF. Over 55 to 74 the chain is Cytoplasmic; sequence LYLSHHDRGYIQMTHLNKAK. The chain crosses the membrane as a helical span at residues 75-95; it reads TALGFLLWIVCWADLFYSFWE. At 96 to 100 the chain is on the extracellular side; it reads RSMGK. A helical transmembrane segment spans residues 101-121; the sequence is LLAPVFLVSPTLLGITMLLAT. Topologically, residues 122–133 are cytoplasmic; sequence FLIQIERRRGVQ. A helical transmembrane segment spans residues 134–154; the sequence is SSGIMLTFWLIALLCALAILR. The Extracellular portion of the chain corresponds to 155-172; the sequence is SKIMTALKEDARVDVFRD. The chain crosses the membrane as a helical span at residues 173–193; that stretch reads VTFYIYFSLVLIQLVLSCFSD. Topologically, residues 194–316 are cytoplasmic; it reads RSPLFSETIN…KERDPSLFKV (123 aa). Tyr277 bears the Phosphotyrosine mark. Phosphoserine is present on Ser289. The chain crosses the membrane as a helical span at residues 317-337; that stretch reads LYKTFGPYFLMSFLFKAVHDL. An ABC transmembrane type-1 1 domain is found at 325-608; that stretch reads FLMSFLFKAV…LPMVISSIVQ (284 aa). The Extracellular segment spans residues 338 to 363; sequence MMFAGPEILKLLINFVNDKKAPEWQG. The helical transmembrane segment at 364–384 threads the bilayer; it reads YFYTALLFISACLQTLVLHQY. Residues 385 to 440 are Cytoplasmic-facing; sequence FHICFVSGMRIKTAVIGAVYRKALVITNAARKSSTVGEIVNLMSVDAQRFMDLATY. A helical transmembrane segment spans residues 441–461; the sequence is INMIWSAPLQVILALYLLWLN. The Extracellular segment spans residues 462-464; it reads LGP. Residues 465–485 form a helical membrane-spanning segment; that stretch reads SVLAGVAVMVLMVPLNAVMAM. Residues 486–547 are Cytoplasmic-facing; that stretch reads KTKTYQVAHM…VLKKSAYLAA (62 aa). Residue Lys503 is modified to N6-succinyllysine. Residues 548–568 traverse the membrane as a helical segment; the sequence is VGTFTWVCTPFLVALSTFAVY. Residues 569–590 lie on the Extracellular side of the membrane; that stretch reads VTVDENNILDAQKAFVSLALFN. Residues 591 to 611 form a helical membrane-spanning segment; it reads ILRFPLNILPMVISSIVQASV. The Cytoplasmic portion of the chain corresponds to 612–966; sequence SLKRLRVFLS…VKLSVYWDYM (355 aa). The region spanning 644–868 is the ABC transporter 1 domain; it reads ITVKNATFTW…DGAFAEFLRT (225 aa). Position 678 to 685 (678 to 685) interacts with ATP; it reads GQVGCGKS. The tract at residues 912-939 is disordered; it reads RQLSSSSSYSRDVSQHHTSTAELRKPGP. Residues Ser915 and Ser930 each carry the phosphoserine modification. A helical transmembrane segment spans residues 967–987; the sequence is KAIGLFISFLSIFLFLCNHVA. One can recognise an ABC transmembrane type-1 2 domain in the interval 974-1255; sequence SFLSIFLFLC…LVRMSSEMET (282 aa). Topologically, residues 988–1024 are extracellular; the sequence is SLVSNYWLSLWTDDPIVNGTQEHTQVRLSVYGALGIS. Residue Asn1005 is glycosylated (N-linked (GlcNAc...) asparagine). A helical transmembrane segment spans residues 1025–1045; the sequence is QGITVFGYSMAVSIGGIFASR. Topologically, residues 1046–1088 are cytoplasmic; it reads RLHLDLLHNVLRSPISFFERTPSGNLVNRFSKELDTVDSMIPQ. The helical transmembrane segment at 1089 to 1109 threads the bilayer; it reads VIKMFMGSLFNVIGACIIILL. Ala1110 is a topological domain (extracellular). Residues 1111–1131 traverse the membrane as a helical segment; that stretch reads TPMAAVIIPPLGLIYFFVQRF. Residues 1132–1202 are Cytoplasmic-facing; that stretch reads YVASSRQLKR…VANRWLAVRL (71 aa). The chain crosses the membrane as a helical span at residues 1203-1223; the sequence is ECVGNCIVLFASLFAVISRHS. The Extracellular portion of the chain corresponds to 1224-1225; sequence LS. A helical membrane pass occupies residues 1226–1246; it reads AGLVGLSVSYSLQVTTYLNWL. The Cytoplasmic portion of the chain corresponds to 1247-1530; it reads VRMSSEMETN…YSMAKDSGLV (284 aa). Residues 1292-1526 form the ABC transporter 2 domain; sequence VEFRDYGLRY…RGLFYSMAKD (235 aa). Residue 1326–1333 participates in ATP binding; it reads GRTGAGKS.

It belongs to the ABC transporter superfamily. ABCC family. Conjugate transporter (TC 3.A.1.208) subfamily. Expressed in heart, spleen, lung, kidney, skeletal muscle, mammary gland and weaker in brain and liver.

It localises to the cell membrane. Its subcellular location is the basolateral cell membrane. The enzyme catalyses ATP + H2O + xenobioticSide 1 = ADP + phosphate + xenobioticSide 2.. The catalysed reaction is an S-substituted glutathione(in) + ATP + H2O = an S-substituted glutathione(out) + ADP + phosphate + H(+). It carries out the reaction sphing-4-enine 1-phosphate(in) + ATP + H2O = sphing-4-enine 1-phosphate(out) + ADP + phosphate + H(+). It catalyses the reaction leukotriene C4(in) + ATP + H2O = leukotriene C4(out) + ADP + phosphate + H(+). The enzyme catalyses 17beta-estradiol 17-O-(beta-D-glucuronate)(in) + ATP + H2O = 17beta-estradiol 17-O-(beta-D-glucuronate)(out) + ADP + phosphate + H(+). The catalysed reaction is daunorubicin(in) + ATP + H2O = daunorubicin(out) + ADP + phosphate + H(+). It carries out the reaction vincristine(in) + ATP + H2O = vincristine(out) + ADP + phosphate + H(+). It catalyses the reaction 2',3'-cGAMP(in) + ATP + H2O = 2',3'-cGAMP(out) + ADP + phosphate + H(+). The enzyme catalyses S-[(2E,6E,10E)-geranylgeranyl]-L-glutathione(in) + ATP + H2O = S-[(2E,6E,10E)-geranylgeranyl]-L-glutathione(out) + ADP + phosphate + H(+). The catalysed reaction is prostaglandin A2-S-(R)-glutathione(in) + ATP + H2O = prostaglandin A2-S-(R)-glutathione(out) + ADP + phosphate + H(+). It carries out the reaction prostaglandin A2-S-(S)-glutathione(in) + ATP + H2O = prostaglandin A2-S-(S)-glutathione(out) + ADP + phosphate + H(+). MK 571 inhibits sphingosine 1-phosphate and leukotriene C4 export. Functionally, mediates export of organic anions and drugs from the cytoplasm. Mediates ATP-dependent transport of glutathione and glutathione conjugates, leukotriene C4, estradiol-17-beta-o-glucuronide, methotrexate, antiviral drugs and other xenobiotics. Confers resistance to anticancer drugs by decreasing accumulation of drug in cells, and by mediating ATP- and GSH-dependent drug export. Hydrolyzes ATP with low efficiency. Catalyzes the export of sphingosine 1-phosphate from mast cells independently of their degranulation. Participates in inflammatory response by allowing export of leukotriene C4 from leukotriene C4-synthesizing cells. Mediates ATP-dependent, GSH-independent cyclic GMP-AMP (cGAMP) export. Thus, by limiting intracellular cGAMP concentrations negatively regulates the cGAS-STING pathway. Exports S-geranylgeranyl-glutathione (GGG) in lymphoid cells and stromal compartments of lymphoid organs. ABCC1 (via extracellular transport) with GGT5 (via GGG catabolism) establish GGG gradients within lymphoid tissues to position P2RY8-positive lymphocytes at germinal centers in lymphoid follicles and restrict their chemotactic transmigration from blood vessels to the bone marrow parenchyma. Mediates basolateral export of GSH-conjugated R- and S-prostaglandin A2 diastereomers in polarized epithelial cells. This Bos taurus (Bovine) protein is Multidrug resistance-associated protein 1.